Reading from the N-terminus, the 551-residue chain is Glucose-6-phosphate isomerase (551 aa).

Glu352 serves as the catalytic Proton donor. Active-site residues include His383 and Lys511.

Belongs to the GPI family.

The protein localises to the cytoplasm. The enzyme catalyses alpha-D-glucose 6-phosphate = beta-D-fructose 6-phosphate. It functions in the pathway carbohydrate biosynthesis; gluconeogenesis. It participates in carbohydrate degradation; glycolysis; D-glyceraldehyde 3-phosphate and glycerone phosphate from D-glucose: step 2/4. In terms of biological role, catalyzes the reversible isomerization of glucose-6-phosphate to fructose-6-phosphate. The protein is Glucose-6-phosphate isomerase of Chlorobium luteolum (strain DSM 273 / BCRC 81028 / 2530) (Pelodictyon luteolum).